A 642-amino-acid chain; its full sequence is Threonine--tRNA ligase (642 aa).

Residues 1–61 enclose the TGS domain; sequence MPVITLPDGS…ETDAELSIIT (61 aa). Residues 243–534 form a catalytic region; the sequence is DHRKIGKQLD…LIEEYAGRFP (292 aa). 3 residues coordinate Zn(2+): C334, H385, and H511.

It belongs to the class-II aminoacyl-tRNA synthetase family. Homodimer. It depends on Zn(2+) as a cofactor.

It is found in the cytoplasm. It carries out the reaction tRNA(Thr) + L-threonine + ATP = L-threonyl-tRNA(Thr) + AMP + diphosphate + H(+). Catalyzes the attachment of threonine to tRNA(Thr) in a two-step reaction: L-threonine is first activated by ATP to form Thr-AMP and then transferred to the acceptor end of tRNA(Thr). Also edits incorrectly charged L-seryl-tRNA(Thr). This Shewanella baltica (strain OS155 / ATCC BAA-1091) protein is Threonine--tRNA ligase.